We begin with the raw amino-acid sequence, 736 residues long: Subtilisin-like protease SBT4.12 (736 aa).

The signal sequence occupies residues 1-24 (MANLAASTCLYSWLLVLLLSSVSA). A propeptide spans 25-110 (IIDEDTQVYI…VFPNKILQLH (86 aa)) (activation peptide). Positions 32–110 (VYIVYMGSLS…VFPNKILQLH (79 aa)) constitute an Inhibitor I9 domain. The region spanning 114-580 (SWDFMGVKEG…AGHVDPMAAL (467 aa)) is the Peptidase S8 domain. Catalysis depends on Asp-142, which acts as the Charge relay system. An N-linked (GlcNAc...) asparagine glycan is attached at Asn-173. His-197 serves as the catalytic Charge relay system. N-linked (GlcNAc...) asparagine glycans are attached at residues Asn-220, Asn-381, and Asn-459. The PA domain occupies 353–437 (KYPLVYGKSA…GLKAKDFKSL (85 aa)). The active-site Charge relay system is Ser-519. Asn-601, Asn-649, and Asn-659 each carry an N-linked (GlcNAc...) asparagine glycan.

This sequence belongs to the peptidase S8 family. The C-terminal propeptide is autocleaved. Specifically expressed in root stele of the root hair zone.

It is found in the secreted. The polypeptide is Subtilisin-like protease SBT4.12 (Arabidopsis thaliana (Mouse-ear cress)).